The chain runs to 130 residues: Chorion class B protein PC10 (130 aa).

A left arm region spans residues 1–22 (GAWNGRLGCGCGGIAPAAELAA). The tract at residues 23–93 (SYGGGLGVAS…GNGALGITAE (71 aa)) is central domain. The segment at 94-130 (RGYGAGIGYEGLGLGYGAGIGYKGYGLGGCGCGCGRL) is right arm (Gly-rich tandem repeats).

The protein belongs to the chorion protein family.

This protein is one of many from the eggshell of the silk moth. This is Chorion class B protein PC10 from Antheraea polyphemus (Polyphemus moth).